The sequence spans 184 residues: ATP synthase subunit b, chloroplastic (184 aa).

A helical membrane pass occupies residues 27-49; it reads LATNPINLSVVLGVLIFFGKGVL.

The protein belongs to the ATPase B chain family. In terms of assembly, F-type ATPases have 2 components, F(1) - the catalytic core - and F(0) - the membrane proton channel. F(1) has five subunits: alpha(3), beta(3), gamma(1), delta(1), epsilon(1). F(0) has four main subunits: a(1), b(1), b'(1) and c(10-14). The alpha and beta chains form an alternating ring which encloses part of the gamma chain. F(1) is attached to F(0) by a central stalk formed by the gamma and epsilon chains, while a peripheral stalk is formed by the delta, b and b' chains.

It localises to the plastid. The protein localises to the chloroplast thylakoid membrane. In terms of biological role, f(1)F(0) ATP synthase produces ATP from ADP in the presence of a proton or sodium gradient. F-type ATPases consist of two structural domains, F(1) containing the extramembraneous catalytic core and F(0) containing the membrane proton channel, linked together by a central stalk and a peripheral stalk. During catalysis, ATP synthesis in the catalytic domain of F(1) is coupled via a rotary mechanism of the central stalk subunits to proton translocation. Its function is as follows. Component of the F(0) channel, it forms part of the peripheral stalk, linking F(1) to F(0). The protein is ATP synthase subunit b, chloroplastic of Pelargonium hortorum (Common geranium).